The following is a 326-amino-acid chain: Polycomb complex protein BMI-1 (326 aa).

The RING-type zinc-finger motif lies at 18-57; the sequence is CVLCGGYFIDATTIIECLHSFCKTCIVRYLETSKYCPICD. The Nuclear localization signal signature appears at 81 to 95; sequence KLVPGLFKNEMKRRR. The tract at residues 162-182 is interaction with PHC2; sequence RYLRCPAAMTVMHLRKFLRSK. Residues 164–228 form an interaction with E4F1 region; it reads LRCPAAMTVM…GPLPLKYRVR (65 aa). Positions 236 to 326 are disordered; that stretch reads IGHQREGLSN…INGSSATSSG (91 aa). Positions 265–278 are enriched in low complexity; the sequence is LPSTSSCLPSPSTP. Positions 279 to 310 are enriched in polar residues; sequence VQSPHPQFPHISSTMNGTSSSPGSNHQSSFTN. Residues 315 to 326 show a composition bias toward low complexity; that stretch reads SSINGSSATSSG.

Component of a PRC1-like complex.

It localises to the nucleus. The protein localises to the cytoplasm. Component of a Polycomb group (PcG) multiprotein PRC1-like complex, a complex class required to maintain the transcriptionally repressive state of many genes, including Hox genes, throughout development. PcG PRC1 complex acts via chromatin remodeling and modification of histones; it mediates monoubiquitination of histone H2A 'Lys-119', rendering chromatin heritably changed in its expressibility. In the PRC1-like complex, regulates the E3 ubiquitin-protein ligase activity of RNF2/RING2. The sequence is that of Polycomb complex protein BMI-1 (BMI1) from Gallus gallus (Chicken).